The sequence spans 338 residues: Glycerol-3-phosphate dehydrogenase [NAD(P)+] (338 aa).

The NADPH site is built by Ser-12, Trp-13, Lys-34, and Lys-110. 3 residues coordinate sn-glycerol 3-phosphate: Lys-110, Gly-141, and Ser-143. Ala-145 is an NADPH binding site. Residues Lys-196, Asp-249, Ser-259, Arg-260, and Asn-261 each contribute to the sn-glycerol 3-phosphate site. Lys-196 serves as the catalytic Proton acceptor. Arg-260 is a binding site for NADPH. NADPH is bound by residues Val-284 and Glu-286.

Belongs to the NAD-dependent glycerol-3-phosphate dehydrogenase family.

It is found in the cytoplasm. The enzyme catalyses sn-glycerol 3-phosphate + NAD(+) = dihydroxyacetone phosphate + NADH + H(+). It carries out the reaction sn-glycerol 3-phosphate + NADP(+) = dihydroxyacetone phosphate + NADPH + H(+). Its pathway is membrane lipid metabolism; glycerophospholipid metabolism. Its function is as follows. Catalyzes the reduction of the glycolytic intermediate dihydroxyacetone phosphate (DHAP) to sn-glycerol 3-phosphate (G3P), the key precursor for phospholipid synthesis. The protein is Glycerol-3-phosphate dehydrogenase [NAD(P)+] of Ligilactobacillus salivarius (strain UCC118) (Lactobacillus salivarius).